The primary structure comprises 202 residues: Dephospho-CoA kinase (202 aa).

The 197-residue stretch at 6 to 202 (KISVTGDPSS…QCFKALKGTI (197 aa)) folds into the DPCK domain. 14 to 19 (SSGKTE) provides a ligand contact to ATP.

It belongs to the CoaE family.

The protein localises to the cytoplasm. The catalysed reaction is 3'-dephospho-CoA + ATP = ADP + CoA + H(+). Its pathway is cofactor biosynthesis; coenzyme A biosynthesis; CoA from (R)-pantothenate: step 5/5. In terms of biological role, catalyzes the phosphorylation of the 3'-hydroxyl group of dephosphocoenzyme A to form coenzyme A. The chain is Dephospho-CoA kinase from Chlamydia trachomatis serovar A (strain ATCC VR-571B / DSM 19440 / HAR-13).